The sequence spans 438 residues: Glutaryl-CoA dehydrogenase, mitochondrial (438 aa).

Residues 1–44 (MALRGVYAQLLNRGPGLRVFRSWSSATAQTEKGEKTQSRSAKPS) constitute a mitochondrion transit peptide. Substrate is bound by residues 138-139 (RS) and Ser-186. Residues 177 to 186 (FGLTEPNHGS), Ser-186, and 212 to 214 (WIT) contribute to the FAD site. N6-acetyllysine is present on Lys-240. A substrate-binding site is contributed by 287-294 (FGCLNNAR). FAD is bound by residues Arg-319, Gln-330, and 387 to 391 (DMLGG). The Proton acceptor role is filled by Glu-414. Residue Gly-415 participates in substrate binding. Residues Thr-416, 416 to 418 (THD), and Phe-434 contribute to the FAD site.

Belongs to the acyl-CoA dehydrogenase family. Homotetramer. FAD serves as cofactor.

It localises to the mitochondrion matrix. It catalyses the reaction glutaryl-CoA + oxidized [electron-transfer flavoprotein] + 2 H(+) = (2E)-butenoyl-CoA + reduced [electron-transfer flavoprotein] + CO2. The protein operates within amino-acid metabolism; lysine degradation. It participates in amino-acid metabolism; tryptophan metabolism. Its function is as follows. Catalyzes the oxidative decarboxylation of glutaryl-CoA to crotonyl-CoA and CO(2) in the degradative pathway of L-lysine, L-hydroxylysine, and L-tryptophan metabolism. It uses electron transfer flavoprotein as its electron acceptor. The polypeptide is Glutaryl-CoA dehydrogenase, mitochondrial (GCDH) (Bos taurus (Bovine)).